The primary structure comprises 89 residues: Small ribosomal subunit protein uS15 (89 aa).

Belongs to the universal ribosomal protein uS15 family. As to quaternary structure, part of the 30S ribosomal subunit. Forms a bridge to the 50S subunit in the 70S ribosome, contacting the 23S rRNA.

Functionally, one of the primary rRNA binding proteins, it binds directly to 16S rRNA where it helps nucleate assembly of the platform of the 30S subunit by binding and bridging several RNA helices of the 16S rRNA. Its function is as follows. Forms an intersubunit bridge (bridge B4) with the 23S rRNA of the 50S subunit in the ribosome. The sequence is that of Small ribosomal subunit protein uS15 from Cereibacter sphaeroides (strain ATCC 17023 / DSM 158 / JCM 6121 / CCUG 31486 / LMG 2827 / NBRC 12203 / NCIMB 8253 / ATH 2.4.1.) (Rhodobacter sphaeroides).